A 247-amino-acid polypeptide reads, in one-letter code: DNA polymerase sliding clamp (247 aa).

Belongs to the PCNA family. Homotrimer. The subunits circularize to form a toroid; DNA passes through its center. Replication factor C (RFC) is required to load the toroid on the DNA.

Sliding clamp subunit that acts as a moving platform for DNA processing. Responsible for tethering the catalytic subunit of DNA polymerase and other proteins to DNA during high-speed replication. In Thermofilum pendens (strain DSM 2475 / Hrk 5), this protein is DNA polymerase sliding clamp.